The primary structure comprises 250 residues: 5-oxoprolinase subunit A (250 aa).

This sequence belongs to the LamB/PxpA family. In terms of assembly, forms a complex composed of PxpA, PxpB and PxpC.

The enzyme catalyses 5-oxo-L-proline + ATP + 2 H2O = L-glutamate + ADP + phosphate + H(+). Its function is as follows. Catalyzes the cleavage of 5-oxoproline to form L-glutamate coupled to the hydrolysis of ATP to ADP and inorganic phosphate. In Klebsiella pneumoniae (strain 342), this protein is 5-oxoprolinase subunit A.